The sequence spans 155 residues: Ribosomal RNA large subunit methyltransferase H (155 aa).

Residues L72, G103, and 122–127 (LSDLTL) contribute to the S-adenosyl-L-methionine site.

It belongs to the RNA methyltransferase RlmH family. As to quaternary structure, homodimer.

The protein localises to the cytoplasm. The catalysed reaction is pseudouridine(1915) in 23S rRNA + S-adenosyl-L-methionine = N(3)-methylpseudouridine(1915) in 23S rRNA + S-adenosyl-L-homocysteine + H(+). Functionally, specifically methylates the pseudouridine at position 1915 (m3Psi1915) in 23S rRNA. This is Ribosomal RNA large subunit methyltransferase H from Acidovorax sp. (strain JS42).